A 246-amino-acid chain; its full sequence is MEPDLSFRGRRALVTGAGKGIGRAVAVALCKAGARVTALSRTAADLESLVRECPGIEPLCLDLADWDATEAAVGAAGPFELLVNNAAVAMLQPFLQVTREAVERSFDVNFRAVLHVSQIVARQMIAQGLPGAIVNVSSQASQRALRDHAVYCSTKSALDMLSKVMAMELGPHKIRVNTVNPTVVMTDMGRINWSDPQKSAAMINRIPLGKFAEVDDVVNSILFLLSDKSAMTTGSSLMVDGGFLVS.

13 to 41 contacts NADP(+); it reads LVTGAGKGIGRAVAVALCKAGARVTALSR. Residue Ser-138 participates in substrate binding. Tyr-151 acts as the Proton acceptor in catalysis. Lys-155 provides a ligand contact to NADP(+).

Belongs to the short-chain dehydrogenases/reductases (SDR) family. Homotetramer. The N-terminus is blocked. As to expression, highly expressed in kidney, and also found in high amounts in liver and testis. Low expression seen in all other tissues tested.

The protein localises to the cytoplasm. The enzyme catalyses D-threitol + NADP(+) = D-erythrulose + NADPH + H(+). It catalyses the reaction xylitol + NADP(+) = L-xylulose + NADPH + H(+). In terms of biological role, catalyzes the reduction of D-erythrulose to D-threitol with the concomitant oxidation of NAD(P)H to NAD(P)(+). NADH is less effective than NADPH. May also catalyze the reduction of L-xylulose. The polypeptide is D-erythrulose reductase (DER) (Gallus gallus (Chicken)).